Here is a 146-residue protein sequence, read N- to C-terminus: Angiogenin (146 aa).

The first 24 residues, 1–24 (MVMGLHLLLLVFILGLGLTPPTLA), serve as a signal peptide directing secretion. Q25 is modified (pyrrolidone carboxylic acid). H37 (proton acceptor) is an active-site residue. Intrachain disulfides connect C50/C105, C63/C116, and C81/C131. The Nucleolar localization signal motif lies at 55–59 (RLRNM). Residue C105 coordinates tRNA. Catalysis depends on H138, which acts as the Proton donor.

This sequence belongs to the pancreatic ribonuclease family. As to quaternary structure, homodimer. Interacts with RNH1; inhibiting ANG ribonuclease activity. Interacts with PCNA.

The protein resides in the secreted. It localises to the nucleus. It is found in the nucleolus. The protein localises to the cytoplasm. Its subcellular location is the stress granule. With respect to regulation, has weak tRNA ribonuclease activity by itself due to partial autoinhibition by its C-terminus, which folds into a short alpha-helix that partially occludes the substrate-binding site. In absence of stress, the ribonuclease activity is inhibited by RNH1 in the cytoplasm. In response to stress, dissociates from RNH1 in the cytoplasm and associates with cytoplasmic ribosomes with vacant A-sites: ribosomes directly activate the tRNA ribonuclease activity of ANG by refolding the C-terminal alpha-helix. In response to stress, the angiogenic activity of ANG is inhibited by RNH1 in the nucleus. In terms of biological role, secreted ribonuclease that can either promote or restrict cell proliferation of target cells, depending on the context. Endocytosed in target cells via its receptor PLXNB2 and translocates to the cytoplasm or nucleus. Under stress conditions, localizes to the cytoplasm and promotes the assembly of stress granules (SGs): specifically cleaves a subset of tRNAs within anticodon loops to produce tRNA-derived stress-induced fragments (tiRNAs), resulting in translation repression and inhibition of cell proliferation. tiRNas also prevent formation of apoptosome, thereby promoting cell survival. Preferentially cleaves RNAs between a pyrimidine and an adenosine residue, suggesting that it cleaves the anticodon loop of tRNA(Ala) (32-UUAGCAU-38) after positions 33 and 36. Cleaves a subset of tRNAs, including tRNA(Ala), tRNA(Glu), tRNA(Gly), tRNA(Lys), tRNA(Val), tRNA(His), tRNA(Asp) and tRNA(Sec). Under growth conditions and in differentiated cells, translocates to the nucleus and stimulates ribosomal RNA (rRNA) transcription, including that containing the initiation site sequences of 45S rRNA, thereby promoting cell growth and proliferation. Angiogenin induces vascularization of normal and malignant tissues via its ability to promote rRNA transcription. Involved in hematopoietic stem and progenitor cell (HSPC) growth and survival by promoting rRNA transcription in growth conditions and inhibiting translation in response to stress, respectively. Mediates the crosstalk between myeloid and intestinal epithelial cells to protect the intestinal epithelial barrier integrity: secreted by myeloid cells and promotes intestinal epithelial cells proliferation and survival. Also mediates osteoclast-endothelial cell crosstalk in growing bone: produced by osteoclasts and protects the neighboring vascular cells against senescence by promoting rRNA transcription. This chain is Angiogenin (ANG), found in Aotus trivirgatus (Three-striped night monkey).